We begin with the raw amino-acid sequence, 185 residues long: uncharacterized protein (185 aa).

3 helical membrane-spanning segments follow: residues 32–52, 66–86, and 155–175; these read LIFV…LLAF, LVTL…VLAV, and IGYG…FLVV.

The protein localises to the cell membrane. This is an uncharacterized protein from Bacillus subtilis (strain 168).